Reading from the N-terminus, the 330-residue chain is Ribosomal RNA small subunit methyltransferase H (330 aa).

Residues 40 to 42 (GGY), D58, F85, D101, and Q108 contribute to the S-adenosyl-L-methionine site.

Belongs to the methyltransferase superfamily. RsmH family.

The protein resides in the cytoplasm. The enzyme catalyses cytidine(1402) in 16S rRNA + S-adenosyl-L-methionine = N(4)-methylcytidine(1402) in 16S rRNA + S-adenosyl-L-homocysteine + H(+). Its function is as follows. Specifically methylates the N4 position of cytidine in position 1402 (C1402) of 16S rRNA. This Roseobacter denitrificans (strain ATCC 33942 / OCh 114) (Erythrobacter sp. (strain OCh 114)) protein is Ribosomal RNA small subunit methyltransferase H.